The following is a 663-amino-acid chain: Rho GTPase-activating protein 18 (663 aa).

The segment at Tyr-15–Ser-37 is disordered. Residues Ser-66 and Ser-69 each carry the phosphoserine modification. A Phosphothreonine modification is found at Thr-158. Disordered stretches follow at residues Arg-179–Glu-227 and Gln-243–Gly-277. Composition is skewed to basic and acidic residues over residues Asn-197–Pro-219 and Glu-245–Asp-258. Ser-263 carries the phosphoserine modification. Positions Val-324–Trp-523 constitute a Rho-GAP domain. Position 610 is a phosphoserine (Ser-610).

In terms of assembly, interacts with MPHOSPH6.

Its subcellular location is the cytoplasm. Functionally, rho GTPase activating protein that suppresses F-actin polymerization by inhibiting Rho. Rho GTPase activating proteins act by converting Rho-type GTPases to an inactive GDP-bound state. Plays a key role in tissue tension and 3D tissue shape by regulating cortical actomyosin network formation. Acts downstream of YAP1 and inhibits actin polymerization, which in turn reduces nuclear localization of YAP1. Regulates cell shape, spreading, and migration. The protein is Rho GTPase-activating protein 18 of Homo sapiens (Human).